Reading from the N-terminus, the 173-residue chain is Small ribosomal subunit protein uS5 (173 aa).

In terms of domain architecture, S5 DRBM spans 16–79; sequence LSELLVSVRR…NAAKKNMIRV (64 aa).

It belongs to the universal ribosomal protein uS5 family. Part of the 30S ribosomal subunit. Contacts proteins S4 and S8.

In terms of biological role, with S4 and S12 plays an important role in translational accuracy. Located at the back of the 30S subunit body where it stabilizes the conformation of the head with respect to the body. This is Small ribosomal subunit protein uS5 from Anaplasma phagocytophilum (strain HZ).